Consider the following 94-residue polypeptide: Acylphosphatase (94 aa).

Residues 7-94 enclose the Acylphosphatase-like domain; sequence AVQARVYGRV…TAPGDFRIVA (88 aa). Active-site residues include Arg-22 and Asn-40.

This sequence belongs to the acylphosphatase family.

The enzyme catalyses an acyl phosphate + H2O = a carboxylate + phosphate + H(+). The protein is Acylphosphatase (acyP) of Mesorhizobium japonicum (strain LMG 29417 / CECT 9101 / MAFF 303099) (Mesorhizobium loti (strain MAFF 303099)).